We begin with the raw amino-acid sequence, 121 residues long: Large ribosomal subunit protein uL24 (121 aa).

The tract at residues 1–30 is disordered; the sequence is MVRIVSKQPRKQRKARYNAPNHTRGRFLSA.

Belongs to the universal ribosomal protein uL24 family. Part of the 50S ribosomal subunit.

Functionally, one of two assembly initiator proteins, it binds directly to the 5'-end of the 23S rRNA, where it nucleates assembly of the 50S subunit. Located at the polypeptide exit tunnel on the outside of the subunit. This Methanoculleus marisnigri (strain ATCC 35101 / DSM 1498 / JR1) protein is Large ribosomal subunit protein uL24.